The following is a 518-amino-acid chain: MAKFTVTSLERHLLLISTVIAVLAALIVSRGCNYLLKRWKLSAYPLYEDKKVTPIEELHSSRDLIAKGFAKSQGKEIWRINTTIGEVLVVSPKYIEKFRYGHGCSAAAYTERELPISAPGYEPFTFASNEWRQRNADIILHRLTGLVSNRKIELSEELSNALESRWTNSTDWHAVSLFQTMTAIVAQTTQYFFTNRELCRNDAYIQSLFAYSSLAFTEGRSLMKWPRVLHPLVARFHPASQNLQSALENVNKHIFPFVRERRAEISRRRFEAAQSGKETPLADEWVAWLDEKAGNEDYNPGVAMVSFSVASFHTTTDFMCQLLCDLARNPAIIEQLKEEASDVLRDHTWTKSSFARLDLMDRCMKESQRLKPIGAVFLKSRAQKDISVENGNIIPAGSLFVVSGHWMHDPAIYPEPEKFDPGRHLRHAEESKPNKPKQFTAVSPEHMGWGYGKHSCPGRFFAATVAKMLLTHILFKYEFKLPDGKLNQHAYEFTTEILVRRRIEEGALNLDSFDSIDR.

The helical transmembrane segment at 12 to 29 (HLLLISTVIAVLAALIVS) threads the bilayer. N81 and N168 each carry an N-linked (GlcNAc...) asparagine glycan. Heme is bound at residue C456.

Belongs to the cytochrome P450 family. Heme serves as cofactor.

It localises to the membrane. Its pathway is mycotoxin biosynthesis. Cytochrome P450 monooxygenase; part of the 2 gene clusters that mediate the biosynthesis of fusicoccins, diterpene glucosides that display phytohormone-like activity and function as potent activators of plasma membrane H(+)-ATPases in plants by modifying 14-3-3 proteins and cause the plant disease constriction canker. The first step in the pathway is performed by the fusicoccadiene synthase PaFS that possesses both prenyl transferase and terpene cyclase activity, converting isopentenyl diphosphate and dimethylallyl diphosphate into geranylgeranyl diphosphate (GGDP) and successively converting GGDP into fusicocca-2,10(14)-diene, a precursor for fusicoccin H. The second step is the oxidation at the C-8 position by the cytochrome P450 monooxygenase PaP450-2 to yield fusicocca-2,10(14)-diene-8-beta-ol. The cytochrome P450 monooxygenase PaP450-1 then catalyzes the hydroxylation at the C-16 position to produce fusicocca-2,10(14)-diene-8-beta,16-diol. The dioxygenase fc-dox then catalyzes the 16-oxydation of fusicocca-2,10(14)-diene-8-beta,16-diol to yield an aldehyde (8-beta-hydroxyfusicocca-1,10(14)-dien-16-al). The short-chain dehydrogenase/reductase fc-sdr catalyzes the reduction of the aldehyde to yield fusicocca-1,10(14)-diene-8-beta,16-diol. The next step is the hydroxylation at C-9 performed by the cytochrome P450 monooxygenase PaP450-3 that leads to fusicoccin H aglycon which is glycosylated to fusicoccin H by the O-glycosyltransferase PaGT. Hydroxylation at C-12 by the cytochrome P450 monooxygenase PaP450-4 leads then to the production of fusicoccin Q and is followed by methylation by the O-methyltransferase PaMT to yield fusicoccin P. Fusicoccin P is further converted to fusicoccin J via prenylation by the O-glucose prenyltransferase PaPT. Cytochrome P450 monooxygenase PaP450-5 then performs hydroxylation at C-19 to yield dideacetyl-fusicoccin A which is acetylated to 3'-O-deacetyl-fusicoccin A by the O-acetyltransferase PaAT-2. Finally, a another acetylation by the O-acetyltransferase PaAT-1 yields fusicoccin A. The sequence is that of Fusicoccin H C-9 hydroxylase from Phomopsis amygdali (Fusicoccum amygdali).